Reading from the N-terminus, the 360-residue chain is UDP-N-acetylglucosamine--N-acetylmuramyl-(pentapeptide) pyrophosphoryl-undecaprenol N-acetylglucosamine transferase (360 aa).

UDP-N-acetyl-alpha-D-glucosamine contacts are provided by residues 16–18 (TGG), N128, R165, S191, I247, 266–271 (ALTVSE), and Q292.

Belongs to the glycosyltransferase 28 family. MurG subfamily.

It is found in the cell inner membrane. It catalyses the reaction di-trans,octa-cis-undecaprenyl diphospho-N-acetyl-alpha-D-muramoyl-L-alanyl-D-glutamyl-meso-2,6-diaminopimeloyl-D-alanyl-D-alanine + UDP-N-acetyl-alpha-D-glucosamine = di-trans,octa-cis-undecaprenyl diphospho-[N-acetyl-alpha-D-glucosaminyl-(1-&gt;4)]-N-acetyl-alpha-D-muramoyl-L-alanyl-D-glutamyl-meso-2,6-diaminopimeloyl-D-alanyl-D-alanine + UDP + H(+). The protein operates within cell wall biogenesis; peptidoglycan biosynthesis. Cell wall formation. Catalyzes the transfer of a GlcNAc subunit on undecaprenyl-pyrophosphoryl-MurNAc-pentapeptide (lipid intermediate I) to form undecaprenyl-pyrophosphoryl-MurNAc-(pentapeptide)GlcNAc (lipid intermediate II). In Shewanella amazonensis (strain ATCC BAA-1098 / SB2B), this protein is UDP-N-acetylglucosamine--N-acetylmuramyl-(pentapeptide) pyrophosphoryl-undecaprenol N-acetylglucosamine transferase.